The sequence spans 137 residues: Actin-depolymerizing factor 2 (137 aa).

The ADF-H domain occupies 5-137 (ASGMAVHDDC…GLDVFKSRTN (133 aa)). S6 is subject to Phosphoserine.

Belongs to the actin-binding proteins ADF family. In terms of assembly, interacts with AIP1-1.

The protein localises to the cytoplasm. The protein resides in the cytoskeleton. Actin-depolymerizing protein. Severs actin filaments (F-actin) and binds to actin monomers. Required for normal cell growth, plant development, cell organ expansion and flowering. Essential for root-knot nematode infection. This chain is Actin-depolymerizing factor 2 (ADF2), found in Arabidopsis thaliana (Mouse-ear cress).